The following is a 524-amino-acid chain: uncharacterized protein (524 aa).

The tract at residues 1 to 65 (MSDPFFTRPE…IDEENEDTYE (65 aa)) is disordered. Residues 21-32 (SKREKENQKLER) show a composition bias toward basic and acidic residues. A compositionally biased stretch (acidic residues) spans 51-64 (GFEDEIDEENEDTY). WD repeat units follow at residues 131 to 176 (IETA…DTEN), 206 to 245 (DHVK…PQHC), 248 to 287 (HHRD…YIET), 290 to 329 (GHQD…QLVF), 342 to 380 (YMEG…PLFT), 409 to 448 (PQPR…RSFE), and 457 to 503 (SVYG…PNSG).

It is found in the nucleus. This is an uncharacterized protein from Schizosaccharomyces pombe (strain 972 / ATCC 24843) (Fission yeast).